Here is a 239-residue protein sequence, read N- to C-terminus: 2,3,4,5-tetrahydropyridine-2,6-dicarboxylate N-acetyltransferase (239 aa).

The protein belongs to the transferase hexapeptide repeat family. DapH subfamily.

The enzyme catalyses (S)-2,3,4,5-tetrahydrodipicolinate + acetyl-CoA + H2O = L-2-acetamido-6-oxoheptanedioate + CoA. Its pathway is amino-acid biosynthesis; L-lysine biosynthesis via DAP pathway; LL-2,6-diaminopimelate from (S)-tetrahydrodipicolinate (acetylase route): step 1/3. In terms of biological role, catalyzes the transfer of an acetyl group from acetyl-CoA to tetrahydrodipicolinate. The chain is 2,3,4,5-tetrahydropyridine-2,6-dicarboxylate N-acetyltransferase from Staphylococcus aureus (strain JH9).